Consider the following 867-residue polypeptide: Mitochondrial escape protein 2 (867 aa).

A mitochondrion-targeting transit peptide spans 1–25; sequence MIIRTLRSQLRLPKPVYISPPCRYY. Residues 26–279 lie on the Mitochondrial matrix side of the membrane; the sequence is STDLEKLKKE…LVSLISNHTK (254 aa). In terms of domain architecture, RRM spans 179–264; the sequence is GTPWIEDLRR…TTLHIQFVAI (86 aa). Residues 280 to 300 form a helical membrane-spanning segment; the sequence is IAIPVLIALLATFAVLIFDPI. The Mitochondrial intermembrane portion of the chain corresponds to 301–867; sequence REWFIEYKIL…DGKSFLGIKF (567 aa). Residues 795-852 are a coiled coil; the sequence is IGRLISLEAAKIQKLEEELEKIYKIGKVDGRIDYVSQKIEASNKKILDLEKQAADVAS.

It belongs to the YME2 family.

Its subcellular location is the mitochondrion inner membrane. In terms of biological role, plays a role in maintaining the mitochondrial genome and in controlling the mtDNA escape. Involved in the regulation of mtDNA nucleotide structure and number. May have a dispensable role in early maturation of pre-rRNA. The protein is Mitochondrial escape protein 2 (PRP13) of Candida albicans (strain SC5314 / ATCC MYA-2876) (Yeast).